A 103-amino-acid polypeptide reads, in one-letter code: ATP synthase F(0) complex subunit g, mitochondrial (103 aa).

Ala2 is subject to N-acetylalanine. N6-acetyllysine occurs at positions 11, 24, and 54.

Belongs to the ATPase g subunit family. As to quaternary structure, component of the ATP synthase complex composed at least of ATP5F1A/subunit alpha, ATP5F1B/subunit beta, ATP5MC1/subunit c (homooctomer), MT-ATP6/subunit a, MT-ATP8/subunit 8, ATP5ME/subunit e, ATP5MF/subunit f, ATP5MG/subunit g, ATP5MK/subunit k, ATP5MJ/subunit j, ATP5F1C/subunit gamma, ATP5F1D/subunit delta, ATP5F1E/subunit epsilon, ATP5PF/subunit F6, ATP5PB/subunit b, ATP5PD/subunit d, ATP5PO/subunit OSCP. ATP synthase complex consists of a soluble F(1) head domain (subunits alpha(3) and beta(3)) - the catalytic core - and a membrane F(0) domain - the membrane proton channel (subunits c, a, 8, e, f, g, k and j). These two domains are linked by a central stalk (subunits gamma, delta, and epsilon) rotating inside the F1 region and a stationary peripheral stalk (subunits F6, b, d, and OSCP).

The protein localises to the mitochondrion. It is found in the mitochondrion inner membrane. In terms of biological role, subunit g, of the mitochondrial membrane ATP synthase complex (F(1)F(0) ATP synthase or Complex V) that produces ATP from ADP in the presence of a proton gradient across the membrane which is generated by electron transport complexes of the respiratory chain. ATP synthase complex consist of a soluble F(1) head domain - the catalytic core - and a membrane F(1) domain - the membrane proton channel. These two domains are linked by a central stalk rotating inside the F(1) region and a stationary peripheral stalk. During catalysis, ATP synthesis in the catalytic domain of F(1) is coupled via a rotary mechanism of the central stalk subunits to proton translocation. In vivo, can only synthesize ATP although its ATP hydrolase activity can be activated artificially in vitro. Part of the complex F(0) domain. This chain is ATP synthase F(0) complex subunit g, mitochondrial, found in Rattus norvegicus (Rat).